The sequence spans 478 residues: Protein WVD2-like 7 (478 aa).

Disordered stretches follow at residues 201–326 (DSAL…TGST) and 385–420 (PMPS…SASI). Residues 208–217 (AGSKLDEHAS) are compositionally biased toward basic and acidic residues. Composition is skewed to polar residues over residues 219–232 (KPSN…SSVN) and 264–277 (GSSL…NVDA). Positions 278–289 (KSQKELRPKKTI) are enriched in basic and acidic residues. Polar residues-rich tracts occupy residues 309 to 326 (RCKT…TGST) and 407 to 420 (VAQS…SASI).

It belongs to the TPX2 family. In terms of tissue distribution, expressed in seedlings.

The protein localises to the cytoplasm. It is found in the cytoskeleton. In terms of biological role, microtubule-associated protein (MAP) that regulates the orientation of interphase cortical microtubules. This chain is Protein WVD2-like 7, found in Arabidopsis thaliana (Mouse-ear cress).